A 332-amino-acid chain; its full sequence is Ribosomal RNA small subunit methyltransferase H (332 aa).

Residues Gly-39–Tyr-41, Asp-56, Phe-83, Asp-100, and Gln-107 each bind S-adenosyl-L-methionine.

The protein belongs to the methyltransferase superfamily. RsmH family.

It localises to the cytoplasm. The enzyme catalyses cytidine(1402) in 16S rRNA + S-adenosyl-L-methionine = N(4)-methylcytidine(1402) in 16S rRNA + S-adenosyl-L-homocysteine + H(+). Functionally, specifically methylates the N4 position of cytidine in position 1402 (C1402) of 16S rRNA. The chain is Ribosomal RNA small subunit methyltransferase H from Bartonella quintana (strain Toulouse) (Rochalimaea quintana).